The primary structure comprises 337 residues: F-box protein At2g27310 (337 aa).

The 49-residue stretch at 10–58 (DSISTLHSDIIQTQILTRLDGPTLASTATTSSYLQTLCTEEKLWQELSI) folds into the F-box domain.

This Arabidopsis thaliana (Mouse-ear cress) protein is F-box protein At2g27310.